The following is a 294-amino-acid chain: Indole-3-glycerol phosphate synthase (294 aa).

This sequence belongs to the TrpC family.

It carries out the reaction 1-(2-carboxyphenylamino)-1-deoxy-D-ribulose 5-phosphate + H(+) = (1S,2R)-1-C-(indol-3-yl)glycerol 3-phosphate + CO2 + H2O. The protein operates within amino-acid biosynthesis; L-tryptophan biosynthesis; L-tryptophan from chorismate: step 4/5. The protein is Indole-3-glycerol phosphate synthase of Synechococcus sp. (strain WH7803).